The chain runs to 202 residues: Small ribosomal subunit protein uS4 (202 aa).

The tract at residues 22–48 (TGKELARRPYAPGDHGQGRRGKLSEYG) is disordered. An S4 RNA-binding domain is found at 93–154 (RRLDNMVYRL…KSKKLAVITG (62 aa)).

This sequence belongs to the universal ribosomal protein uS4 family. As to quaternary structure, part of the 30S ribosomal subunit. Contacts protein S5. The interaction surface between S4 and S5 is involved in control of translational fidelity.

Functionally, one of the primary rRNA binding proteins, it binds directly to 16S rRNA where it nucleates assembly of the body of the 30S subunit. Its function is as follows. With S5 and S12 plays an important role in translational accuracy. The protein is Small ribosomal subunit protein uS4 of Lactiplantibacillus plantarum (strain ATCC BAA-793 / NCIMB 8826 / WCFS1) (Lactobacillus plantarum).